A 249-amino-acid chain; its full sequence is ATP synthase subunit a, chloroplastic (249 aa).

The next 5 helical transmembrane spans lie at 38–58 (AQVL…AVLA), 97–117 (VPFI…GALL), 136–156 (INTT…AGLH), 201–221 (LVVA…MMFL), and 222–242 (GLFT…AYIG).

Belongs to the ATPase A chain family. In terms of assembly, F-type ATPases have 2 components, CF(1) - the catalytic core - and CF(0) - the membrane proton channel. CF(1) has five subunits: alpha(3), beta(3), gamma(1), delta(1), epsilon(1). CF(0) has four main subunits: a, b, b' and c.

Its subcellular location is the plastid. It is found in the chloroplast thylakoid membrane. Its function is as follows. Key component of the proton channel; it plays a direct role in the translocation of protons across the membrane. This Physcomitrium patens (Spreading-leaved earth moss) protein is ATP synthase subunit a, chloroplastic.